A 264-amino-acid chain; its full sequence is Proliferating cell nuclear antigen (264 aa).

Residues 61–80 mediate DNA binding; the sequence is RCDRNISMGMNLGNMAKMLK.

Belongs to the PCNA family.

It localises to the nucleus. In terms of biological role, this protein is an auxiliary protein of DNA polymerase delta and is involved in the control of eukaryotic DNA replication by increasing the polymerase's processibility during elongation of the leading strand. The protein is Proliferating cell nuclear antigen of Daucus carota (Wild carrot).